The following is a 272-amino-acid chain: 3-methyl-2-oxobutanoate hydroxymethyltransferase (272 aa).

Positions 43 and 82 each coordinate Mg(2+). Residues 43–44, aspartate 82, and lysine 112 contribute to the 3-methyl-2-oxobutanoate site; that span reads DS. Glutamate 114 contacts Mg(2+). Glutamate 179 (proton acceptor) is an active-site residue.

It belongs to the PanB family. Homodecamer; pentamer of dimers. Mg(2+) serves as cofactor.

The protein resides in the cytoplasm. It carries out the reaction 3-methyl-2-oxobutanoate + (6R)-5,10-methylene-5,6,7,8-tetrahydrofolate + H2O = 2-dehydropantoate + (6S)-5,6,7,8-tetrahydrofolate. Its pathway is cofactor biosynthesis; (R)-pantothenate biosynthesis; (R)-pantoate from 3-methyl-2-oxobutanoate: step 1/2. In terms of biological role, catalyzes the reversible reaction in which hydroxymethyl group from 5,10-methylenetetrahydrofolate is transferred onto alpha-ketoisovalerate to form ketopantoate. The chain is 3-methyl-2-oxobutanoate hydroxymethyltransferase from Staphylococcus aureus (strain JH1).